Here is a 72-residue protein sequence, read N- to C-terminus: Translation initiation factor IF-1 (72 aa).

The 72-residue stretch at Met1–Lys72 folds into the S1-like domain.

The protein belongs to the IF-1 family. Component of the 30S ribosomal translation pre-initiation complex which assembles on the 30S ribosome in the order IF-2 and IF-3, IF-1 and N-formylmethionyl-tRNA(fMet); mRNA recruitment can occur at any time during PIC assembly.

It localises to the cytoplasm. Its function is as follows. One of the essential components for the initiation of protein synthesis. Stabilizes the binding of IF-2 and IF-3 on the 30S subunit to which N-formylmethionyl-tRNA(fMet) subsequently binds. Helps modulate mRNA selection, yielding the 30S pre-initiation complex (PIC). Upon addition of the 50S ribosomal subunit IF-1, IF-2 and IF-3 are released leaving the mature 70S translation initiation complex. The protein is Translation initiation factor IF-1 of Albidiferax ferrireducens (strain ATCC BAA-621 / DSM 15236 / T118) (Rhodoferax ferrireducens).